We begin with the raw amino-acid sequence, 203 residues long: Small ribosomal subunit protein uS4c (203 aa).

Residues 15-42 (LGALPGLTSKRPRAGSDPRNQELSGNKS) form a disordered region. The region spanning 89 to 150 (MRLDNILFRL…DQKSKAMIQN (62 aa)) is the S4 RNA-binding domain.

It belongs to the universal ribosomal protein uS4 family. As to quaternary structure, part of the 30S ribosomal subunit. Contacts protein S5. The interaction surface between S4 and S5 is involved in control of translational fidelity.

The protein resides in the plastid. Its subcellular location is the chloroplast. Its function is as follows. One of the primary rRNA binding proteins, it binds directly to 16S rRNA where it nucleates assembly of the body of the 30S subunit. In terms of biological role, with S5 and S12 plays an important role in translational accuracy. The polypeptide is Small ribosomal subunit protein uS4c (rps4) (Oenothera elata subsp. hookeri (Hooker's evening primrose)).